The sequence spans 399 residues: Forkhead box protein Q1 (399 aa).

The interval 1–112 is disordered; it reads MKLEVFAPRA…EGARSKPYTR (112 aa). The segment covering 32–54 has biased composition (low complexity); sequence LSAAGDDSLGSDGDCAANSPAAG. Residues 55-66 show a composition bias toward gly residues; the sequence is SGAGDLEGGGGE. A DNA-binding region (fork-head) is located at residues 114–205; that stretch reads PKPPYSYIAL…SEYTFADGVF (92 aa). Residues 211-263 form a disordered region; it reads RLSHRTTVSASGYGGGSPPGPAGTPQPAPTAGSSPIARSPARQEEGSSPASKF. Positions 228 to 238 are enriched in pro residues; sequence PPGPAGTPQPA.

It is found in the nucleus. In terms of biological role, plays a role in hair follicle differentiation. This is Forkhead box protein Q1 (Foxq1) from Rattus norvegicus (Rat).